The primary structure comprises 301 residues: Pyridoxal 5'-phosphate synthase subunit PdxS (301 aa).

Asp-31 provides a ligand contact to D-ribose 5-phosphate. The active-site Schiff-base intermediate with D-ribose 5-phosphate is Lys-88. A D-ribose 5-phosphate-binding site is contributed by Gly-160. Residue Arg-172 coordinates D-glyceraldehyde 3-phosphate. Residues Gly-221 and 242–243 contribute to the D-ribose 5-phosphate site; that span reads GS. The interval 273–301 is disordered; sequence EIAKSPGKGMKGQANETLPEEEKLQDRGI. Positions 292–301 are enriched in basic and acidic residues; it reads EEEKLQDRGI.

This sequence belongs to the PdxS/SNZ family. As to quaternary structure, in the presence of PdxT, forms a dodecamer of heterodimers.

It catalyses the reaction aldehydo-D-ribose 5-phosphate + D-glyceraldehyde 3-phosphate + L-glutamine = pyridoxal 5'-phosphate + L-glutamate + phosphate + 3 H2O + H(+). It functions in the pathway cofactor biosynthesis; pyridoxal 5'-phosphate biosynthesis. Its function is as follows. Catalyzes the formation of pyridoxal 5'-phosphate from ribose 5-phosphate (RBP), glyceraldehyde 3-phosphate (G3P) and ammonia. The ammonia is provided by the PdxT subunit. Can also use ribulose 5-phosphate and dihydroxyacetone phosphate as substrates, resulting from enzyme-catalyzed isomerization of RBP and G3P, respectively. In Natronomonas pharaonis (strain ATCC 35678 / DSM 2160 / CIP 103997 / JCM 8858 / NBRC 14720 / NCIMB 2260 / Gabara) (Halobacterium pharaonis), this protein is Pyridoxal 5'-phosphate synthase subunit PdxS.